The primary structure comprises 375 residues: MSCPVIELTQQLIRRPSLSPDDAGCQALLIERLQAIGFTVERMDFADTQNFWAWRGQGETLAFAGHTDVVPPGDADRWINPPFEPTIRDGMLFGRGAADMKGSLAAMVVAAERFVAQHPNHTGRLAFLITSDEEASAHNGTVKVVEALMSRNERLDYCLVGEPSSIEVVGDVVKNGRRGSLTCNLTIHGVQGHVAYPHLADNPVHRAAPFLNELVAIEWDQGNEFFPATSMQIANIQAGTGSNNVIPGELFVQFNFRFSTELTDEMIKAQVLALLEKHQLRYTVDWWLSGQPFLTARGKLVDAVVNAVEHYNEIKPQLLTTGGTSDGRFIARMGAQVVELGPVNATIHKINECVNAADLQLLARMYQRIMEQLVA.

His66 is a binding site for Zn(2+). Asp68 is a catalytic residue. Asp99 serves as a coordination point for Zn(2+). Glu133 (proton acceptor) is an active-site residue. Zn(2+) is bound by residues Glu134, Glu162, and His348.

It belongs to the peptidase M20A family. DapE subfamily. Homodimer. Requires Zn(2+) as cofactor. Co(2+) is required as a cofactor.

The enzyme catalyses N-succinyl-(2S,6S)-2,6-diaminopimelate + H2O = (2S,6S)-2,6-diaminopimelate + succinate. It participates in amino-acid biosynthesis; L-lysine biosynthesis via DAP pathway; LL-2,6-diaminopimelate from (S)-tetrahydrodipicolinate (succinylase route): step 3/3. Its function is as follows. Catalyzes the hydrolysis of N-succinyl-L,L-diaminopimelic acid (SDAP), forming succinate and LL-2,6-diaminopimelate (DAP), an intermediate involved in the bacterial biosynthesis of lysine and meso-diaminopimelic acid, an essential component of bacterial cell walls. The polypeptide is Succinyl-diaminopimelate desuccinylase (Escherichia coli (strain SE11)).